A 777-amino-acid chain; its full sequence is Cullin-3 (777 aa).

A disordered region spans residues 568 to 596; that stretch reads YPPPKASMSNEENGPGPSSSGESMKERKP. Positions 576–589 are enriched in low complexity; it reads SNEENGPGPSSSGE. A Cullin neddylation domain is found at 707–769; it reads DRKLEVEAAI…REYLARDEHD (63 aa). Residue Lys-721 forms a Glycyl lysine isopeptide (Lys-Gly) (interchain with G-Cter in NEDD8) linkage.

It belongs to the cullin family. As to quaternary structure, probable component of multiple cullin-RING-based BCB (BTB-CUL3-BTB) E3 ubiquitin-protein ligase complexes formed by cul-3, rbx-1 and a variable BTB domain-containing protein acting as both, adapter to cullin and substrate recognition component. Interacts with bath-15, bath-40, bath-41, bath-42, C17F4.8, tag-303, D2045.8, F57C2.1, ZC239.15 and B0281.5. Interacts with mel-26 (via BTB domain). Interacts with dcn-1. Post-translationally, neddylated. Deneddylated via its interaction with the COP9 signalosome (CSN) complex.

Its subcellular location is the cytoplasm. It localises to the nucleus. The protein operates within protein modification; protein ubiquitination. Functionally, probable core component of multiple cullin-RING-based BCB (BTB-CUL3-BTB) E3 ubiquitin-protein ligase complexes which mediate the ubiquitination and subsequent proteasomal degradation of target proteins. Probably acts as a scaffold protein which may contribute to catalysis through positioning of the substrate and the ubiquitin-conjugating enzyme. Required to target mei-3/katanin for degradation at the meiosis to mitosis transition via its neddylation and deneddylation. Functions in ubiquitin-mediated degradation of CKIs to target cki-1 for degradation. Regulates microtubule stability in the early embryo. In body wall muscles, involved in the organization of myosin thick filaments, likely by regulating the degradation of microtubule severing protein mei-1 downstream of unc-89. Together with spop-1, may promote the ubiquitination and proteasomal degradation of target bromodomain-containing proteins such as bet-1. The polypeptide is Cullin-3 (Caenorhabditis elegans).